The following is a 1553-amino-acid chain: Mediator of RNA polymerase II transcription subunit 14 (1553 aa).

2 short sequence motifs (LXXLL motif) span residues 55 to 59 and 472 to 476; these read LAELL and LPALL. Ser615 is modified (phosphoserine). Disordered regions lie at residues 699–723, 1006–1199, and 1513–1553; these read FATQ…GTSG, ASHE…LNRP, and GVGS…GGPQ. Ser1015 is modified (phosphoserine). Composition is skewed to low complexity over residues 1024 to 1039 and 1065 to 1080; these read GGPS…GSSP and PSSS…HPSA. Positions 1081-1090 are enriched in gly residues; the sequence is GAGGGSGPQG. Pro residues predominate over residues 1099–1108; sequence PPAPHMPHPS. Positions 1131–1155 are enriched in polar residues; sequence GPNTLYMQSHQDSPFTAMSPANNNW. Positions 1159-1169 are enriched in pro residues; the sequence is PSMPRPSPRPG. Residues 1177-1193 are compositionally biased toward gly residues; it reads TGGGAGVAGGTDRGGSR. Residues 1515 to 1534 show a composition bias toward low complexity; sequence GSSPNPMMPMQQLPQQVGPQ.

Belongs to the Mediator complex subunit 14 family. As to quaternary structure, component of the Mediator complex, which may include CDK8, MED4, MED6, MED11, MED14, MED17, MED18, MED20, MED21, MED22, MED27, MED28, MED30 and MED31.

It is found in the nucleus. In terms of biological role, component of the Mediator complex, a coactivator involved in the regulated transcription of nearly all RNA polymerase II-dependent genes. Mediator functions as a bridge to convey information from gene-specific regulatory proteins to the basal RNA polymerase II transcription machinery. Mediator is recruited to promoters by direct interactions with regulatory proteins and serves as a scaffold for the assembly of a functional pre-initiation complex with RNA polymerase II and the general transcription factors. Required for activated transcription of the MtnA, MtnB and MtnD genes. The chain is Mediator of RNA polymerase II transcription subunit 14 (MED14) from Drosophila melanogaster (Fruit fly).